Reading from the N-terminus, the 908-residue chain is Protein translocase subunit SecA (908 aa).

Residues glutamine 87, 105–109 (GEGKT), and aspartate 512 contribute to the ATP site. The disordered stretch occupies residues 876–908 (QAPMIRDGEKVGRNDPCPCGSGRKYKQCHGKLS). Zn(2+) is bound by residues cysteine 892, cysteine 894, cysteine 903, and histidine 904. Residues 898-908 (RKYKQCHGKLS) are compositionally biased toward basic residues.

This sequence belongs to the SecA family. Monomer and homodimer. Part of the essential Sec protein translocation apparatus which comprises SecA, SecYEG and auxiliary proteins SecDF-YajC and YidC. Zn(2+) serves as cofactor.

The protein resides in the cell inner membrane. It localises to the cytoplasm. The catalysed reaction is ATP + H2O + cellular proteinSide 1 = ADP + phosphate + cellular proteinSide 2.. Its function is as follows. Part of the Sec protein translocase complex. Interacts with the SecYEG preprotein conducting channel. Has a central role in coupling the hydrolysis of ATP to the transfer of proteins into and across the cell membrane, serving both as a receptor for the preprotein-SecB complex and as an ATP-driven molecular motor driving the stepwise translocation of polypeptide chains across the membrane. This Shewanella baltica (strain OS185) protein is Protein translocase subunit SecA.